The following is an 858-amino-acid chain: Protein VACUOLELESS1 (858 aa).

The protein belongs to the VPS16 family. Core component of at least two putative endosomal tethering complexes, the homotypic fusion and vacuole protein sorting (HOPS) complex and the class C core vacuole/endosome tethering (CORVET) complex. Their common core is composed of the class C Vps proteins VPS11, VCL1, VPS18 and VPS33, which in HOPS further associates with VPS39 and VPS41 and in CORVET with VPS3. Expressed in roots, leaves, stems, siliques, flowers and mature pollen.

The protein resides in the vacuole membrane. It is found in the prevacuolar compartment membrane. Its function is as follows. Required for vacuole biogenesis and vacuole enlargment in dividing and expanding cells. Involved in the docking or fusion of prevacuolar vesicles. Important for the function of both male and female gametophytes, but is not essential for the germination and development of pollen. The polypeptide is Protein VACUOLELESS1 (VCL1) (Arabidopsis thaliana (Mouse-ear cress)).